The primary structure comprises 195 residues: Small ribosomal subunit protein uS4c (195 aa).

The S4 RNA-binding domain maps to 82-143 (MRLDNILFRL…KQRSKALIQN (62 aa)).

The protein belongs to the universal ribosomal protein uS4 family. As to quaternary structure, part of the 30S ribosomal subunit. Contacts protein S5. The interaction surface between S4 and S5 is involved in control of translational fidelity.

The protein localises to the plastid. Its subcellular location is the chloroplast. Functionally, one of the primary rRNA binding proteins, it binds directly to 16S rRNA where it nucleates assembly of the body of the 30S subunit. In terms of biological role, with S5 and S12 plays an important role in translational accuracy. The sequence is that of Small ribosomal subunit protein uS4c (rps4) from Watsonia angusta.